A 282-amino-acid polypeptide reads, in one-letter code: Phosphate import ATP-binding protein PstB (282 aa).

The tract at residues 1–33 (MNMAETQLNPIARPTAPAGFDPAQSGQSQAPSR) is disordered. The 242-residue stretch at 36-277 (IEINDLNFFY…PVRKETEDYI (242 aa)) folds into the ABC transporter domain. ATP is bound at residue 68 to 75 (GPSGCGKS).

Belongs to the ABC transporter superfamily. Phosphate importer (TC 3.A.1.7) family. The complex is composed of two ATP-binding proteins (PstB), two transmembrane proteins (PstC and PstA) and a solute-binding protein (PstS).

Its subcellular location is the cell inner membrane. The enzyme catalyses phosphate(out) + ATP + H2O = ADP + 2 phosphate(in) + H(+). Functionally, part of the ABC transporter complex PstSACB involved in phosphate import. Responsible for energy coupling to the transport system. This is Phosphate import ATP-binding protein PstB from Paraburkholderia xenovorans (strain LB400).